Here is a 57-residue protein sequence, read N- to C-terminus: Large ribosomal subunit protein bL32 (57 aa).

This sequence belongs to the bacterial ribosomal protein bL32 family.

The sequence is that of Large ribosomal subunit protein bL32 from Staphylococcus epidermidis (strain ATCC 35984 / DSM 28319 / BCRC 17069 / CCUG 31568 / BM 3577 / RP62A).